The sequence spans 770 residues: Elongation factor G, mitochondrial (770 aa).

A mitochondrion-targeting transit peptide spans 1-24 (MLKLSFRSLTSRLPRLSTLVVRGY). In terms of domain architecture, tr-type G spans 57 to 353 (KQIRNIGISA…AVCDYLPNPS (297 aa)). GTP is bound by residues 66–73 (AHIDSGKT), 151–155 (DTPGH), and 205–208 (NKMD).

It belongs to the TRAFAC class translation factor GTPase superfamily. Classic translation factor GTPase family. EF-G/EF-2 subfamily.

The protein localises to the mitochondrion. Its pathway is protein biosynthesis; polypeptide chain elongation. Its function is as follows. Mitochondrial GTPase that catalyzes the GTP-dependent ribosomal translocation step during translation elongation. During this step, the ribosome changes from the pre-translocational (PRE) to the post-translocational (POST) state as the newly formed A-site-bound peptidyl-tRNA and P-site-bound deacylated tRNA move to the P and E sites, respectively. Catalyzes the coordinated movement of the two tRNA molecules, the mRNA and conformational changes in the ribosome. The chain is Elongation factor G, mitochondrial (mef1) from Schizosaccharomyces pombe (strain 972 / ATCC 24843) (Fission yeast).